Consider the following 343-residue polypeptide: Multidrug resistance protein MdtN (343 aa).

Over M1–K12 the chain is Cytoplasmic. The helical; Signal-anchor for type II membrane protein transmembrane segment at F13–V33 threads the bilayer. Residues D34 to Q343 lie on the Periplasmic side of the membrane.

It belongs to the membrane fusion protein (MFP) (TC 8.A.1) family. Could be part of a tripartite efflux system composed of MdtN, MdtO and MdtP.

The protein localises to the cell inner membrane. Functionally, could be involved in resistance to puromycin, acriflavine and tetraphenylarsonium chloride. This Escherichia coli O157:H7 protein is Multidrug resistance protein MdtN (mdtN).